Reading from the N-terminus, the 123-residue chain is Dihydroneopterin triphosphate 2'-epimerase (123 aa).

The protein belongs to the DHNA family. As to quaternary structure, homooctamer. Dimer of tetramers.

It catalyses the reaction 7,8-dihydroneopterin 3'-triphosphate = 7,8-dihydromonapterin 3'-triphosphate. Its function is as follows. Catalyzes the epimerization of carbon 2' of the side chain of 7,8-dihydroneopterin triphosphate (H2NTP) to form 7,8-dihydromonapterin triphosphate (H2MTP). Is required for tetrahydromonapterin biosynthesis. This Pseudomonas aeruginosa (strain ATCC 15692 / DSM 22644 / CIP 104116 / JCM 14847 / LMG 12228 / 1C / PRS 101 / PAO1) protein is Dihydroneopterin triphosphate 2'-epimerase.